Consider the following 406-residue polypeptide: 12S rRNA N(4)-cytidine methyltransferase METTL15 (406 aa).

Residues 1–22 (MLRYPYFYRTYNRLFSHFVDSG) constitute a mitochondrion transit peptide. S-adenosyl-L-methionine is bound by residues 100–102 (GGH), Asp119, Phe146, Asp169, and Gln176. Ser358 is subject to Phosphoserine.

It belongs to the methyltransferase superfamily. RsmH family.

It is found in the mitochondrion matrix. It carries out the reaction cytidine(839) in 12S rRNA + S-adenosyl-L-methionine = N(4)-methylcytidine(839) in 12S rRNA + S-adenosyl-L-homocysteine + H(+). In terms of biological role, N4-methylcytidine (m4C) methyltransferase responsible for the methylation of position C839 in mitochondrial 12S rRNA. Involved in the stabilization of 12S rRNA folding, therefore facilitating the assembly of the mitochondrial small ribosomal subunits. The polypeptide is 12S rRNA N(4)-cytidine methyltransferase METTL15 (Mus musculus (Mouse)).